Here is a 323-residue protein sequence, read N- to C-terminus: MLKSTVSNTRIKCCRIDQRRNYLFTALASSALGSFLWSKNNVLASKMENGELHYHDPNLTFNKKLFNGKPPFERRAPDYPGHVPLYNFEKVLMFLGSSMGAFFHPEENKYIVALGESTAITPILQHLRHKMLSDPVGRTILREKPRMTSDSLNLTYLRSLPDNTIGKNYVNWLDKENVSPDTRVPVRYIDNEELAYIYQRYRECHDFYHAITGLPIIIEGEIAVKVFEFANIGIPMSGLGALFAPLRLKPSQRQRLREIYYPWAIKNGLFSKPLINVYWEKILEKDVNEFRQEMGIQQPPDLRNMRKEYFAKKKLEKQLQGRK.

A mitochondrion-targeting transit peptide spans 1–29 (MLKSTVSNTRIKCCRIDQRRNYLFTALAS). Zn(2+)-binding residues include H205, D206, H209, and E221.

The protein belongs to the COQ4 family. As to quaternary structure, component of a multi-subunit COQ enzyme complex, composed of at least COQ3, COQ4, COQ5, COQ6, COQ7 and COQ9. Zn(2+) serves as cofactor.

The protein localises to the mitochondrion inner membrane. The enzyme catalyses a 4-hydroxy-3-methoxy-5-(all-trans-polyprenyl)benzoate + H(+) = a 2-methoxy-6-(all-trans-polyprenyl)phenol + CO2. It participates in cofactor biosynthesis; ubiquinone biosynthesis. Lyase that catalyzes the C1-decarboxylation of 4-hydroxy-3-methoxy-5-(all-trans-polyprenyl)benzoic acid into 2-methoxy-6-(all-trans-polyprenyl)phenol during ubiquinone biosynthesis. This is Ubiquinone biosynthesis protein COQ4, mitochondrial from Candida dubliniensis (strain CD36 / ATCC MYA-646 / CBS 7987 / NCPF 3949 / NRRL Y-17841) (Yeast).